The sequence spans 537 residues: Pheophorbide a oxygenase, chloroplastic (537 aa).

The transit peptide at 1 to 49 (MSVVLLSSTSATITKSQSKKIPFLSPTTKFPLKVSISPSRSKLFHNPLR) directs the protein to the chloroplast. The segment at 51–77 (AAPPSVPTSDSTEEKRIEEEYGGDKEE) is disordered. Residues 62-77 (TEEKRIEEEYGGDKEE) show a composition bias toward basic and acidic residues. The 113-residue stretch at 88 to 200 (WYPVSLVEDL…TMVSQGLLFV (113 aa)) folds into the Rieske domain. [2Fe-2S] cluster contacts are provided by Cys130, His132, Cys150, and His153.

Interacts with HCAR, SGR1, RCCR, PPH and the LHCII complex. Part of a SGR1-CCE-LHCII complex, which acts in chlorophyll breakdown.

It localises to the plastid. Its subcellular location is the chloroplast thylakoid membrane. The catalysed reaction is pheophorbide a + 2 reduced [2Fe-2S]-[ferredoxin] + O2 + 2 H(+) = red chlorophyll catabolite + 2 oxidized [2Fe-2S]-[ferredoxin]. It functions in the pathway porphyrin-containing compound metabolism; chlorophyll degradation. Might be regulated by a phosphorylation/dephosphorylation mechanism. In terms of biological role, catalyzes the key reaction of chlorophyll catabolism, porphyrin macrocycle cleavage of pheophorbide a (pheide a) to a primary fluorescent catabolite (pFCC). Works in a two-step reaction with red chlorophyll catabolite reductase (RCCR). Creates the intermediate RCC through the opening of the porphyrin macrocycle by the introduction of one atom of molecular oxygen at the alpha-methine bridge. Seems to be specific for pheide a. Belongs to the chlorophyll catabolic enzymes (CCEs). The polypeptide is Pheophorbide a oxygenase, chloroplastic (PAO) (Arabidopsis thaliana (Mouse-ear cress)).